Here is a 61-residue protein sequence, read N- to C-terminus: Large ribosomal subunit protein uL30 (61 aa).

Belongs to the universal ribosomal protein uL30 family. Part of the 50S ribosomal subunit.

This chain is Large ribosomal subunit protein uL30, found in Chlorobium phaeobacteroides (strain BS1).